A 294-amino-acid polypeptide reads, in one-letter code: 1D-myo-inositol 2-acetamido-2-deoxy-alpha-D-glucopyranoside deacetylase (294 aa).

Zn(2+) is bound by residues His-14, Asp-17, and His-149.

It belongs to the MshB deacetylase family. Zn(2+) serves as cofactor.

The enzyme catalyses 1D-myo-inositol 2-acetamido-2-deoxy-alpha-D-glucopyranoside + H2O = 1D-myo-inositol 2-amino-2-deoxy-alpha-D-glucopyranoside + acetate. Functionally, catalyzes the deacetylation of 1D-myo-inositol 2-acetamido-2-deoxy-alpha-D-glucopyranoside (GlcNAc-Ins) in the mycothiol biosynthesis pathway. The protein is 1D-myo-inositol 2-acetamido-2-deoxy-alpha-D-glucopyranoside deacetylase of Rhodococcus erythropolis (strain PR4 / NBRC 100887).